A 619-amino-acid chain; its full sequence is 1-deoxy-D-xylulose-5-phosphate synthase (619 aa).

Thiamine diphosphate contacts are provided by residues histidine 80 and 121–123 (GHS). Aspartate 152 lines the Mg(2+) pocket. Residues 153-154 (GA), asparagine 181, tyrosine 288, and glutamate 370 each bind thiamine diphosphate. Asparagine 181 provides a ligand contact to Mg(2+).

This sequence belongs to the transketolase family. DXPS subfamily. Homodimer. It depends on Mg(2+) as a cofactor. Requires thiamine diphosphate as cofactor.

The enzyme catalyses D-glyceraldehyde 3-phosphate + pyruvate + H(+) = 1-deoxy-D-xylulose 5-phosphate + CO2. It participates in metabolic intermediate biosynthesis; 1-deoxy-D-xylulose 5-phosphate biosynthesis; 1-deoxy-D-xylulose 5-phosphate from D-glyceraldehyde 3-phosphate and pyruvate: step 1/1. Functionally, catalyzes the acyloin condensation reaction between C atoms 2 and 3 of pyruvate and glyceraldehyde 3-phosphate to yield 1-deoxy-D-xylulose-5-phosphate (DXP). This Yersinia pseudotuberculosis serotype O:3 (strain YPIII) protein is 1-deoxy-D-xylulose-5-phosphate synthase.